The chain runs to 765 residues: 1,4-alpha-glucan branching enzyme GlgB (765 aa).

Asp-431 (nucleophile) is an active-site residue. Glu-484 serves as the catalytic Proton donor.

Belongs to the glycosyl hydrolase 13 family. GlgB subfamily. In terms of assembly, monomer.

It catalyses the reaction Transfers a segment of a (1-&gt;4)-alpha-D-glucan chain to a primary hydroxy group in a similar glucan chain.. The protein operates within glycan biosynthesis; glycogen biosynthesis. In terms of biological role, catalyzes the formation of the alpha-1,6-glucosidic linkages in glycogen by scission of a 1,4-alpha-linked oligosaccharide from growing alpha-1,4-glucan chains and the subsequent attachment of the oligosaccharide to the alpha-1,6 position. In Synechococcus sp. (strain CC9605), this protein is 1,4-alpha-glucan branching enzyme GlgB.